Consider the following 393-residue polypeptide: Phosphoglycerate kinase (393 aa).

Substrate is bound by residues 21–23 (DFN), Arg-37, 60–63 (HLGR), Arg-119, and Arg-152. Residues Lys-202, Glu-323, and 349–352 (GGDT) each bind ATP.

It belongs to the phosphoglycerate kinase family. As to quaternary structure, monomer.

It is found in the cytoplasm. It carries out the reaction (2R)-3-phosphoglycerate + ATP = (2R)-3-phospho-glyceroyl phosphate + ADP. It functions in the pathway carbohydrate degradation; glycolysis; pyruvate from D-glyceraldehyde 3-phosphate: step 2/5. The protein is Phosphoglycerate kinase of Desulforudis audaxviator (strain MP104C).